The chain runs to 407 residues: MGSKRRVILLPTLGVVVLAIAAAVLLHAGEAADVANGQFARASGTRFTVGGRPFYSNGFNAYWLMYMASDPGDRSKAAGVLQQAASLRATLVRTWAFSDGGYRPLQKSPGVYNEDMFMGLDFVIAEAKKRGLYLILSLVNNWDGFGGKKQYVQWARDQGHNLGSDDDFFRSDVTKQFYKNHAVLTRVNKITGVAYKDDPTIFAWELINEPRCQSDLSGKTLQAWVTEMAGYVKSVDPNHMVEIGLEGFYGESMHKNFNPGYTVGTDFIANNLVPAVDFATIHSYPDQWVSGASSDEQVAFMRKWMADHIRDSAAVLRKPLLVTEFGWSARSNGYTVAARDAYFRTVYDAVYASAREGGACAGGLFWQVMAPGMESWTDGYEVVLERSKSTADVVAHQCARIAGLSPA.

The first 31 residues, 1–31 (MGSKRRVILLPTLGVVVLAIAAAVLLHAGEA), serve as a signal peptide directing secretion. Substrate-binding residues include Trp95 and Asn208. Glu209 (proton donor) is an active-site residue. Residue Tyr284 participates in substrate binding. Glu324 (nucleophile) is an active-site residue. A substrate-binding site is contributed by Trp366.

The protein belongs to the glycosyl hydrolase 5 (cellulase A) family. In terms of tissue distribution, expression not detected.

It localises to the secreted. It catalyses the reaction Random hydrolysis of (1-&gt;4)-beta-D-mannosidic linkages in mannans, galactomannans and glucomannans.. In Oryza sativa subsp. japonica (Rice), this protein is Putative mannan endo-1,4-beta-mannosidase 9 (MAN9).